We begin with the raw amino-acid sequence, 166 residues long: MTESTSRRPAYARLLDRAVRILAVRDHSEQELRRKLAAPIMGKNGPEEIDATAEDYERVIAWCHEHGYLDDSRFVARFIASRSRKGYGPARIRQELNQKGISREATEKAMRECDIDWCALARDQATRKYGEPLPTVFSEKVKIQRFLLYRGYLMEDIQDIWRNFAD.

The protein belongs to the RecX family.

The protein localises to the cytoplasm. Functionally, modulates RecA activity. This is Regulatory protein RecX from Escherichia coli O139:H28 (strain E24377A / ETEC).